Here is a 245-residue protein sequence, read N- to C-terminus: Endonuclease III (245 aa).

A HhH domain is found at 119 to 138; it reads MDKLVTLPGVGRKTANVILG. 4 residues coordinate [4Fe-4S] cluster: Cys-198, Cys-205, Cys-208, and Cys-214.

It belongs to the Nth/MutY family. It depends on [4Fe-4S] cluster as a cofactor.

The catalysed reaction is 2'-deoxyribonucleotide-(2'-deoxyribose 5'-phosphate)-2'-deoxyribonucleotide-DNA = a 3'-end 2'-deoxyribonucleotide-(2,3-dehydro-2,3-deoxyribose 5'-phosphate)-DNA + a 5'-end 5'-phospho-2'-deoxyribonucleoside-DNA + H(+). In terms of biological role, DNA repair enzyme that has both DNA N-glycosylase activity and AP-lyase activity. The DNA N-glycosylase activity releases various damaged pyrimidines from DNA by cleaving the N-glycosidic bond, leaving an AP (apurinic/apyrimidinic) site. The AP-lyase activity cleaves the phosphodiester bond 3' to the AP site by a beta-elimination, leaving a 3'-terminal unsaturated sugar and a product with a terminal 5'-phosphate. Has a preference for oxidized pyrimidines, such as thymine glycol (prefers 5S isomers) 5,6-dihydrouracil:G, 5-hydroxyuracil:G, 5-hydroxycytosine:G and urea:A. Cleaves ssDNA containing an AP site. In Mycobacterium tuberculosis (strain ATCC 25618 / H37Rv), this protein is Endonuclease III.